Reading from the N-terminus, the 344-residue chain is Phenylalanine--tRNA ligase alpha subunit (344 aa).

Glu255 contributes to the Mg(2+) binding site.

This sequence belongs to the class-II aminoacyl-tRNA synthetase family. Phe-tRNA synthetase alpha subunit type 1 subfamily. In terms of assembly, tetramer of two alpha and two beta subunits. Mg(2+) serves as cofactor.

It is found in the cytoplasm. It catalyses the reaction tRNA(Phe) + L-phenylalanine + ATP = L-phenylalanyl-tRNA(Phe) + AMP + diphosphate + H(+). The sequence is that of Phenylalanine--tRNA ligase alpha subunit from Sulfurihydrogenibium sp. (strain YO3AOP1).